The chain runs to 97 residues: MKIEVNKNLIKHLENLSLIQLSQNEEKMLENDITNIIKFFEKINELDLSNVEPLFHPLPQGRLRKDTPRDPLDRENALKNVKRKENGYIVGPRTYGE.

A disordered region spans residues 58–78; the sequence is LPQGRLRKDTPRDPLDRENAL. Residues 63–77 show a composition bias toward basic and acidic residues; the sequence is LRKDTPRDPLDRENA.

It belongs to the GatC family. As to quaternary structure, heterotrimer of A, B and C subunits.

The enzyme catalyses L-glutamyl-tRNA(Gln) + L-glutamine + ATP + H2O = L-glutaminyl-tRNA(Gln) + L-glutamate + ADP + phosphate + H(+). It catalyses the reaction L-aspartyl-tRNA(Asn) + L-glutamine + ATP + H2O = L-asparaginyl-tRNA(Asn) + L-glutamate + ADP + phosphate + 2 H(+). Allows the formation of correctly charged Asn-tRNA(Asn) or Gln-tRNA(Gln) through the transamidation of misacylated Asp-tRNA(Asn) or Glu-tRNA(Gln) in organisms which lack either or both of asparaginyl-tRNA or glutaminyl-tRNA synthetases. The reaction takes place in the presence of glutamine and ATP through an activated phospho-Asp-tRNA(Asn) or phospho-Glu-tRNA(Gln). The polypeptide is Aspartyl/glutamyl-tRNA(Asn/Gln) amidotransferase subunit C (Saccharolobus islandicus (strain Y.N.15.51 / Yellowstone #2) (Sulfolobus islandicus)).